The chain runs to 278 residues: Phosphatidylglycerol--prolipoprotein diacylglyceryl transferase (278 aa).

Transmembrane regions (helical) follow at residues 13–33 (LFGI…ALAV), 50–70 (VFDF…LYYV), and 89–109 (NGGL…FFFT). Arginine 135 contributes to the a 1,2-diacyl-sn-glycero-3-phospho-(1'-sn-glycerol) binding site. The next 3 membrane-spanning stretches (helical) occupy residues 175 to 195 (QPTF…LVLL), 205 to 225 (GEVF…IEGL), and 236 to 256 (IRVS…IVIV).

Belongs to the Lgt family.

The protein localises to the cell membrane. It carries out the reaction L-cysteinyl-[prolipoprotein] + a 1,2-diacyl-sn-glycero-3-phospho-(1'-sn-glycerol) = an S-1,2-diacyl-sn-glyceryl-L-cysteinyl-[prolipoprotein] + sn-glycerol 1-phosphate + H(+). It participates in protein modification; lipoprotein biosynthesis (diacylglyceryl transfer). Its function is as follows. Catalyzes the transfer of the diacylglyceryl group from phosphatidylglycerol to the sulfhydryl group of the N-terminal cysteine of a prolipoprotein, the first step in the formation of mature lipoproteins. This chain is Phosphatidylglycerol--prolipoprotein diacylglyceryl transferase, found in Enterococcus faecalis (strain ATCC 700802 / V583).